The chain runs to 170 residues: UPF0260 protein RPB_3505 (170 aa).

The protein belongs to the UPF0260 family.

This Rhodopseudomonas palustris (strain HaA2) protein is UPF0260 protein RPB_3505.